Consider the following 632-residue polypeptide: 1-deoxy-D-xylulose-5-phosphate synthase (632 aa).

Thiamine diphosphate is bound by residues histidine 77 and 118 to 120 (GHS). Aspartate 149 is a binding site for Mg(2+). Residues 150 to 151 (GA), asparagine 178, tyrosine 289, and glutamate 372 each bind thiamine diphosphate. Asparagine 178 contacts Mg(2+).

The protein belongs to the transketolase family. DXPS subfamily. As to quaternary structure, homodimer. Mg(2+) is required as a cofactor. It depends on thiamine diphosphate as a cofactor.

It catalyses the reaction D-glyceraldehyde 3-phosphate + pyruvate + H(+) = 1-deoxy-D-xylulose 5-phosphate + CO2. The protein operates within metabolic intermediate biosynthesis; 1-deoxy-D-xylulose 5-phosphate biosynthesis; 1-deoxy-D-xylulose 5-phosphate from D-glyceraldehyde 3-phosphate and pyruvate: step 1/1. Its function is as follows. Catalyzes the acyloin condensation reaction between C atoms 2 and 3 of pyruvate and glyceraldehyde 3-phosphate to yield 1-deoxy-D-xylulose-5-phosphate (DXP). In Listeria innocua serovar 6a (strain ATCC BAA-680 / CLIP 11262), this protein is 1-deoxy-D-xylulose-5-phosphate synthase.